Reading from the N-terminus, the 606-residue chain is Ubiquitin carboxyl-terminal hydrolase 2 (606 aa).

The interval methionine 1–glutamate 201 is necessary for interaction with MDM4. 2 disordered regions span residues proline 53–glycine 112 and alanine 207–threonine 228. The span at lysine 90 to glutamate 100 shows a compositional bias: basic and acidic residues. The USP domain maps to alanine 268–alanine 600. Catalysis depends on cysteine 277, which acts as the Nucleophile. The necessary for interaction with MDM4 stretch occupies residues tyrosine 404–lysine 504. Zn(2+)-binding residues include cysteine 426, cysteine 429, cysteine 477, and cysteine 480. Histidine 558 (proton acceptor) is an active-site residue.

It belongs to the peptidase C19 family. USP2 subfamily. Homooligomer. Found in trimeric complex with MDM2 and MDM4 and USP2. Interacts with CCND1; the interaction is direct and promotes its stabilization by antagonizing ubiquitin-dependent degradation. Interacts (via N-terminus and C-terminus) with MDM2. Interacts with MDM4 and PER1. Interacts with KCNQ1; counteracts the NEDD4L-specific down-regulation of I(Ks) and restores plasma membrane localization of KCNQ1.

Its subcellular location is the cytoplasm. The protein localises to the perinuclear region. The catalysed reaction is Thiol-dependent hydrolysis of ester, thioester, amide, peptide and isopeptide bonds formed by the C-terminal Gly of ubiquitin (a 76-residue protein attached to proteins as an intracellular targeting signal).. Its activity is regulated as follows. Cleavage is inhibited by ubiquitin in a dosage-dependent manner. Cleavage is blocked by ubiquitin aldehyde. Hydrolase that deubiquitinates polyubiquitinated target proteins such as MDM2, MDM4 and CCND1. Possesses both ubiquitin-specific peptidase and isopeptidase activities. Deubiquitinates MDM2 without reversing MDM2-mediated p53/TP53 ubiquitination and thus indirectly promotes p53/TP53 degradation and limits p53 activity. Has no deubiquitinase activity against p53/TP53. Prevents MDM2-mediated degradation of MDM4. Plays a role in the G1/S cell-cycle progression in normal and cancer cells. Plays a role in the regulation of myogenic differentiation of embryonic muscle cells. Regulates the circadian clock by modulating its intrinsic circadian rhythm and its capacity to respond to external cues. Associates with clock proteins and deubiquitinates core clock component PER1 but does not affect its overall stability. Regulates the nucleocytoplasmic shuttling and nuclear retention of PER1 and its repressive role on the clock transcription factors CLOCK and BMAL1. The polypeptide is Ubiquitin carboxyl-terminal hydrolase 2 (USP2) (Bos taurus (Bovine)).